A 252-amino-acid chain; its full sequence is Ubiquinone biosynthesis protein COQ4 homolog 1, mitochondrial (252 aa).

Zn(2+)-binding residues include H130, D131, H134, and E146.

It belongs to the COQ4 family. In terms of assembly, component of a multi-subunit COQ enzyme complex. Zn(2+) serves as cofactor.

It localises to the mitochondrion inner membrane. The catalysed reaction is a 4-hydroxy-3-methoxy-5-(all-trans-polyprenyl)benzoate + H(+) = a 2-methoxy-6-(all-trans-polyprenyl)phenol + CO2. It functions in the pathway cofactor biosynthesis; ubiquinone biosynthesis. Lyase that catalyzes the C1-decarboxylation of 4-hydroxy-3-methoxy-5-(all-trans-polyprenyl)benzoic acid into 2-methoxy-6-(all-trans-polyprenyl)phenol during ubiquinone biosynthesis. In Trypanosoma cruzi (strain CL Brener), this protein is Ubiquinone biosynthesis protein COQ4 homolog 1, mitochondrial.